Reading from the N-terminus, the 632-residue chain is Asparagine synthetase [glutamine-hydrolyzing] 1 (632 aa).

Residue cysteine 2 is the For GATase activity of the active site. The 213-residue stretch at 2-214 folds into the Glutamine amidotransferase type-2 domain; that stretch reads CGFVGVFNKH…PGSQFTIRPD (213 aa). L-glutamine contacts are provided by residues 52 to 56, 77 to 79, and aspartate 102; these read RLSII and NGE. ATP-binding positions include valine 288 and 361–362; that span reads SG.

Belongs to the asparagine synthetase family.

The enzyme catalyses L-aspartate + L-glutamine + ATP + H2O = L-asparagine + L-glutamate + AMP + diphosphate + H(+). Its pathway is amino-acid biosynthesis; L-asparagine biosynthesis; L-asparagine from L-aspartate (L-Gln route): step 1/1. Functionally, main asparagine synthetase in vegetative cells. The polypeptide is Asparagine synthetase [glutamine-hydrolyzing] 1 (asnB) (Bacillus subtilis (strain 168)).